The chain runs to 74 residues: Putative membrane protein insertion efficiency factor (74 aa).

Belongs to the UPF0161 family.

It is found in the cell inner membrane. Its function is as follows. Could be involved in insertion of integral membrane proteins into the membrane. The protein is Putative membrane protein insertion efficiency factor of Blochmanniella floridana.